Here is a 252-residue protein sequence, read N- to C-terminus: Flap endonuclease Xni (252 aa).

Asp-103 contacts Mg(2+). The 5'-3' exonuclease domain maps to 159-248; it reads VLPEQLPDYW…LKGNLQQLRL (90 aa). Residues Leu-170, Ala-171, Pro-179, Ile-181, and Ile-184 each coordinate K(+). The tract at residues 183–188 is interaction with DNA; sequence GIGPKT.

The protein belongs to the Xni family. The cofactor is Mg(2+). Requires K(+) as cofactor.

Functionally, has flap endonuclease activity. During DNA replication, flap endonucleases cleave the 5'-overhanging flap structure that is generated by displacement synthesis when DNA polymerase encounters the 5'-end of a downstream Okazaki fragment. This Photorhabdus laumondii subsp. laumondii (strain DSM 15139 / CIP 105565 / TT01) (Photorhabdus luminescens subsp. laumondii) protein is Flap endonuclease Xni.